A 4588-amino-acid chain; its full sequence is Protocadherin Fat 1 (4588 aa).

Positions 1–21 are cleaved as a signal peptide; it reads MGRHLALLLLLLLLFQHFGDS. Residues 22–4181 are Extracellular-facing; that stretch reads DGSQRLEQTP…STPWNIGLAE (4160 aa). Cadherin domains lie at 35 to 149 and 150 to 257; these read THLE…RPLF and SPTS…APVI. Asparagine 40 is a glycosylation site (N-linked (GlcNAc...) asparagine). Asparagine 333 is a glycosylation site (N-linked (GlcNAc...) asparagine). Cadherin domains lie at 368-463, 464-569, 570-673, 718-822, 823-927, 928-1034, 1035-1139, 1140-1245, 1246-1357, 1359-1456, 1457-1562, 1563-1667, 1668-1765, 1766-1879, 1880-1979, 1980-2081, 2082-2182, 2183-2283, 2284-2390, 2391-2492, 2493-2596, 2597-2703, 2704-2809, 2810-2918, 2919-3023, 3024-3125, 3126-3230, 3231-3335, 3336-3440, 3441-3545, and 3546-3647; these read EKDV…PPEF, TQTA…TPLF, EKIN…VNLQ, STLP…PPEF, LQES…PPTF, IPPN…PPVF, SSFV…APQT, SEPV…KPQF, LQKF…EPIS, EESF…RPQF, STSK…APWF, TASS…SPKF, TSKE…APVF, MQAE…PPVF, AKPL…HLKF, TQDV…APVF, VNLP…MPVF, EKPF…PPVF, AQQS…PPLF, EQQI…SPAF, LQNE…APQF, RATK…LPKF, SEPF…SPVF, ESSP…PPRF, TAEI…SPVC, EKTL…APEF, SADP…PPVF, EYRE…TPVF, SQDT…APVF, SRGN…PPAI, and LPLE…AIRF. N-linked (GlcNAc...) asparagine glycans are attached at residues asparagine 660, asparagine 740, and asparagine 791. Asparagine 998 is a glycosylation site (N-linked (GlcNAc...) asparagine). Residues asparagine 1426 and asparagine 1551 are each glycosylated (N-linked (GlcNAc...) asparagine). Residues asparagine 1748, asparagine 1864, asparagine 1902, asparagine 1940, and asparagine 1991 are each glycosylated (N-linked (GlcNAc...) asparagine). Asparagine 2325 and asparagine 2464 each carry an N-linked (GlcNAc...) asparagine glycan. Asparagine 3324, asparagine 3422, asparagine 3444, asparagine 3613, asparagine 3640, and asparagine 3716 each carry an N-linked (GlcNAc...) asparagine glycan. The 38-residue stretch at 3790–3827 folds into the EGF-like 1 domain; that stretch reads VHHGCEDDPCPEGSECVSDPWEEKHTCVCPSGRFGQCP. 15 disulfides stabilise this stretch: cysteine 3794–cysteine 3805, cysteine 3799–cysteine 3816, cysteine 3818–cysteine 3826, cysteine 3976–cysteine 4009, cysteine 4017–cysteine 4028, cysteine 4022–cysteine 4038, cysteine 4040–cysteine 4049, cysteine 4056–cysteine 4067, cysteine 4061–cysteine 4076, cysteine 4078–cysteine 4087, cysteine 4093–cysteine 4104, cysteine 4098–cysteine 4113, cysteine 4115–cysteine 4124, cysteine 4131–cysteine 4142, and cysteine 4136–cysteine 4151. The region spanning 3829–4009 is the Laminin G-like domain; it reads SSSMTLTGNS…EESVDVSPGC (181 aa). EGF-like domains are found at residues 4013-4050, 4052-4088, and 4089-4125; these read ATED…THCE, SVNP…QRCQ, and LSPY…ERCQ. An EGF-like 5; calcium-binding domain is found at 4127–4163; sequence DIDECSGNPCLHGALCENTHGSYHCNCSHEYRGRHCE. The N-linked (GlcNAc...) asparagine glycan is linked to asparagine 4152. A disulfide bridge connects residues cysteine 4153 and cysteine 4162. Residues 4182–4202 form a helical membrane-spanning segment; sequence GIGIVVFVAGIFLLVVVFVLC. Residues 4203-4588 are Cytoplasmic-facing; sequence RKMISRKKKH…PLDSQQHTEV (386 aa). The short motif at 4204-4214 is the Nuclear localization signal element; sequence KMISRKKKHQA. Disordered regions lie at residues 4255–4275, 4303–4327, and 4343–4376; these read SYTP…SFEG, SVAP…QKPS, and LSKK…SESC. Positions 4256–4265 are enriched in polar residues; that stretch reads YTPSIPSDSR. Residues 4363 to 4374 show a composition bias toward polar residues; the sequence is SEVQSLSSFQSE. A PTB-like motif motif is present at residues 4378-4382; the sequence is DNGYH. 2 disordered regions span residues 4435 to 4479 and 4565 to 4588; these read FPPP…SSSR and ESGD…HTEV.

As to quaternary structure, interacts (via the C-terminus 4300-4400 AA) with ATN1. Interacts with RERE. Post-translationally, undergoes proteolytic cleavage. The extracellular domain is cleaved off and the cytoplasmic domain (about 400 AA) shuttles to the nucleus. As to expression, expressed in many epithelial and some endothelial and smooth muscle cells.

The protein resides in the cell membrane. It localises to the nucleus. Its function is as follows. Plays an essential role for cellular polarization, directed cell migration and modulating cell-cell contact. The protein is Protocadherin Fat 1 (FAT1) of Homo sapiens (Human).